The following is a 1026-amino-acid chain: Contactin-4 (1026 aa).

Residues 1-18 (MRLPWELLVLQSFMLCLA) form the signal peptide. Ig-like C2-type domains lie at 32-117 (PSHV…AKLQ), 122-206 (ENFK…HQVL), 225-311 (PKIE…GQVT), 316-400 (PNWV…AELS), 406-493 (PDFS…GNVV), and 497-586 (PTKV…DKLS). 6 disulfides stabilise this stretch: Cys50/Cys100, Cys144/Cys194, Cys247/Cys295, Cys337/Cys384, Cys429/Cys477, and Cys519/Cys576. 3 N-linked (GlcNAc...) asparagine glycosylation sites follow: Asn65, Asn90, and Asn191. Asn370, Asn375, and Asn466 each carry an N-linked (GlcNAc...) asparagine glycan. Fibronectin type-III domains are found at residues 599–697 (PPEA…TEEA), 702–799 (TPAN…SAEE), 804–899 (PPAS…TRKP), and 900–995 (PPSQ…ISNS). The tract at residues 685–710 (PSRPSEKRRTEEALPEVTPANVSGGG) is disordered. Residues 687 to 696 (RPSEKRRTEE) show a composition bias toward basic and acidic residues. N-linked (GlcNAc...) asparagine glycosylation is found at Asn705, Asn764, Asn858, Asn893, Asn911, Asn929, and Asn954. Residue Ser1000 is the site of GPI-anchor amidated serine attachment. The propeptide at 1001 to 1026 (GASTSNACTLSAISTIMISLTARSSL) is removed in mature form.

Belongs to the immunoglobulin superfamily. Contactin family. Interacts with PTPRG. As to expression, specifically expressed in the nervous system. Not expressed in heart, spleen, lung, liver, kidney or skeletal muscle. In the hippocampus, it is highly expressed in CA1 pyramidal cells and weakly expressed in other regions of the hippocampus.

It localises to the cell membrane. The protein resides in the secreted. In terms of biological role, contactins mediate cell surface interactions during nervous system development. Has some neurite outgrowth-promoting activity. May be involved in synaptogenesis. This chain is Contactin-4 (Cntn4), found in Rattus norvegicus (Rat).